Here is a 92-residue protein sequence, read N- to C-terminus: PqqA binding protein (92 aa).

This sequence belongs to the PqqD family. Monomer. Interacts with PqqE.

The protein operates within cofactor biosynthesis; pyrroloquinoline quinone biosynthesis. Functionally, functions as a PqqA binding protein and presents PqqA to PqqE, in the pyrroloquinoline quinone (PQQ) biosynthetic pathway. This chain is PqqA binding protein, found in Xanthomonas axonopodis pv. citri (strain 306).